A 605-amino-acid chain; its full sequence is Alanine--tRNA ligase (605 aa).

Positions 463, 467, 565, and 569 each coordinate Zn(2+).

It belongs to the class-II aminoacyl-tRNA synthetase family. It depends on Zn(2+) as a cofactor.

It localises to the cytoplasm. The catalysed reaction is tRNA(Ala) + L-alanine + ATP = L-alanyl-tRNA(Ala) + AMP + diphosphate. In terms of biological role, catalyzes the attachment of alanine to tRNA(Ala) in a two-step reaction: alanine is first activated by ATP to form Ala-AMP and then transferred to the acceptor end of tRNA(Ala). Also edits incorrectly charged Ser-tRNA(Ala) and Gly-tRNA(Ala) via its editing domain. This chain is Alanine--tRNA ligase (alaS), found in Treponema pallidum (strain Nichols).